Reading from the N-terminus, the 378-residue chain is Carbamoyl phosphate synthase small chain (378 aa).

The tract at residues 1–189 is CPSase; that stretch reads MTKPAILALA…DSHPEIAASE (189 aa). Positions 47, 241, and 243 each coordinate L-glutamine. Residues 193–378 enclose the Glutamine amidotransferase type-1 domain; sequence HVVAYDYGVK…RFIDAMAKRR (186 aa). Catalysis depends on Cys269, which acts as the Nucleophile. 5 residues coordinate L-glutamine: Leu270, Gln273, Asn311, Gly313, and Phe314. Active-site residues include His353 and Glu355.

The protein belongs to the CarA family. In terms of assembly, composed of two chains; the small (or glutamine) chain promotes the hydrolysis of glutamine to ammonia, which is used by the large (or ammonia) chain to synthesize carbamoyl phosphate. Tetramer of heterodimers (alpha,beta)4.

The catalysed reaction is hydrogencarbonate + L-glutamine + 2 ATP + H2O = carbamoyl phosphate + L-glutamate + 2 ADP + phosphate + 2 H(+). The enzyme catalyses L-glutamine + H2O = L-glutamate + NH4(+). It participates in amino-acid biosynthesis; L-arginine biosynthesis; carbamoyl phosphate from bicarbonate: step 1/1. It functions in the pathway pyrimidine metabolism; UMP biosynthesis via de novo pathway; (S)-dihydroorotate from bicarbonate: step 1/3. In terms of biological role, small subunit of the glutamine-dependent carbamoyl phosphate synthetase (CPSase). CPSase catalyzes the formation of carbamoyl phosphate from the ammonia moiety of glutamine, carbonate, and phosphate donated by ATP, constituting the first step of 2 biosynthetic pathways, one leading to arginine and/or urea and the other to pyrimidine nucleotides. The small subunit (glutamine amidotransferase) binds and cleaves glutamine to supply the large subunit with the substrate ammonia. In Pseudomonas syringae pv. tomato (strain ATCC BAA-871 / DC3000), this protein is Carbamoyl phosphate synthase small chain.